A 487-amino-acid chain; its full sequence is Beta-barrel assembly-enhancing protease (487 aa).

Positions 1–27 (MFRQLKKNLVATLIAALALGQVAPAFA) are cleaved as a signal peptide. Histidine 136 contributes to the Zn(2+) binding site. Glutamate 137 is a catalytic residue. Residues histidine 140 and glutamate 201 each contribute to the Zn(2+) site. Aspartate 205 acts as the Proton donor in catalysis. TPR repeat units follow at residues 309–342 (HAAQ…EPNN) and 427–460 (DQEL…AKLG).

The protein belongs to the peptidase M48 family. BepA subfamily. It depends on Zn(2+) as a cofactor.

The protein resides in the periplasm. Functions both as a chaperone and a metalloprotease. Maintains the integrity of the outer membrane by promoting either the assembly or the elimination of outer membrane proteins, depending on their folding state. In Salmonella typhi, this protein is Beta-barrel assembly-enhancing protease.